Here is a 979-residue protein sequence, read N- to C-terminus: MTCADVTDLCTQASQLVQQLRTKDGELGFMSAAVYDTAWVSMVQKTTPEGRQWLLPKCFEYILRTQLEDGSWETYASDVDGILNTAASLLALETHAESRIASTDPPVEEMKERIGRARAALSRQLQAWSVKDTVHVGFEIILPALLRLLREKGHEFEFDGRAELDRLNRIKLSKFRPEYLYSARTTALHSLEAFVGMIDFDKVAHQKVNGSFMFSPSSTAAFLMFSSSWDDECEQYLRLVLQNGAGGGTGGMPSAYPSKYFEVSWVRGQLARLESKLTELQALTTLLDNGYSTGDLGIEDTDSLGEMLRDALVKGGGIVGFAPSIQADADDTAKSLIAVSLLDKPVSAQGLIDAFEGPMHFRTYHGERDPSFTANSNVLLALLNTPDAATVSPQIEKAAAFLCDVWWTADSEIGDKWNLSPYYPSMLMAEAFGKLLQVWSDGGLKSISSQFIRDRVSVCLYQALVRTLQTQNENGSWGSHSHEETAYAILTIAHACQLPVVNQLWTNVQLAVSRGRKFLQNSAGDKAEYLWVEKVTYSSILLSKSYVLAALKVSFERSYPACLANLFIVSKKRVIEFARFHSMLPLFSSMELWKVRAAIVEGYLLLPQLRDRRLAVFSRTGMEEDKYFEYIPFTWTLCNNRRNTFLSTKTLVEMMVISFLNYQADEFMEAVVGRLNSSQRSMTRSCIDEIFRDLKDKPELNDAIQAQSGPRNADANGHRILPQAKRIKMGSQLPSDVSRVLSAFVHHVMDHPSVKAAAPLEYERVKNELQVFLLSHIEQADDNGRFAAQLESTRDDFETARSSFYRWVSSTSSDHTSCPYSFAFYQCLLGFEQASHNAACFQTCEEKYVAEAMCRHLAVMCRMYNDYGSLARDRDEKNLNCVNFPEFAQAGPKSDAVRQKQLFSLAEFERSNMKRGLEVLTEMAAQDRAKMRMLEKVQMFCDVTDVYGQIYALEILRVGCDLAHDCFMLELPAQWSNST.

The short motif at 34-39 (VYDTAW) is the VYDTAW motif element. The DXDD B-type cyclization motif signature appears at 328–331 (DADD). Positions 665, 669, 865, 866, 869, and 873 each coordinate Mg(2+). A DEXXE A-type cyclization motif motif is present at residues 665 to 669 (DEFME).

Belongs to the terpene synthase family. Mg(2+) serves as cofactor.

It catalyses the reaction (2E,6E,10E)-geranylgeranyl diphosphate = ent-copalyl diphosphate. The catalysed reaction is ent-copalyl diphosphate = ent-pimara-8(14),15-diene + diphosphate. Its pathway is secondary metabolite biosynthesis; terpenoid biosynthesis. Functionally, bifunctional terpene synthase; part of the gene cluster that mediates the biosynthesis of the diterpene ent-pimara-8(14),15-diene (PD). Within the cluster, the HMG-CoA reductase AN1593 functions in the mevalonate pathway, which produces isoprenoid precursors. The geranylgeranyl pyrophosphate (GGPP) synthase AN1592 is needed in the formation of GGPP, the precursor for diterpenes. Lastly, the pimaradiene synthase pbcA performs the 2 cyclization steps that convert GGPP to ent-pimara-8(14),15-diene with ent-copalyl diphosphate as an intermediate. The putative roles of the remaining cluster enzymes in ent-pimara-8(14),15-diene biosynthesis is unclear. The cytochrome P450 monooxygenase AN1598, the glutathione S-transferase AN1595, the oxidoreductases AN1596 and AN1597 probably function as decorative enzymes. It is possible that in biological conditions the compound is oxidized to ent-pimara-8(14),15-dien-19-oic acid, which is a bioactive diterpene compound predominant in many plant extracts. In Emericella nidulans (strain FGSC A4 / ATCC 38163 / CBS 112.46 / NRRL 194 / M139) (Aspergillus nidulans), this protein is Pimaradiene synthase pbcA.